Consider the following 321-residue polypeptide: Peroxidase 5 (321 aa).

The N-terminal stretch at 1–24 (MERFSLRFVLMMVSIILTSSICQA) is a signal peptide. Glutamine 25 is modified (pyrrolidone carboxylic acid). 4 cysteine pairs are disulfide-bonded: cysteine 35–cysteine 115, cysteine 68–cysteine 73, cysteine 121–cysteine 317, and cysteine 201–cysteine 227. The active-site Proton acceptor is histidine 66. Ca(2+) is bound by residues aspartate 67, valine 70, glycine 72, aspartate 74, and serine 76. Proline 164 lines the substrate pocket. Heme b is bound at residue histidine 194. Threonine 195 contributes to the Ca(2+) binding site. Residue asparagine 211 is glycosylated (N-linked (GlcNAc...) asparagine). Residues aspartate 240, threonine 243, and aspartate 248 each coordinate Ca(2+). An N-linked (GlcNAc...) asparagine glycan is attached at asparagine 285.

The protein belongs to the peroxidase family. Classical plant (class III) peroxidase subfamily. Heme b serves as cofactor. It depends on Ca(2+) as a cofactor.

Its subcellular location is the secreted. It carries out the reaction 2 a phenolic donor + H2O2 = 2 a phenolic radical donor + 2 H2O. In terms of biological role, removal of H(2)O(2), oxidation of toxic reductants, biosynthesis and degradation of lignin, suberization, auxin catabolism, response to environmental stresses such as wounding, pathogen attack and oxidative stress. These functions might be dependent on each isozyme/isoform in each plant tissue. This chain is Peroxidase 5 (PER5), found in Arabidopsis thaliana (Mouse-ear cress).